The chain runs to 589 residues: uncharacterized protein (589 aa).

A run of 5 helical transmembrane segments spans residues 11-31 (LNWI…TMLA), 57-77 (LILM…FSVL), 97-117 (FWFF…HAIA), 190-210 (IEFT…GFNI), and 213-233 (GVVF…VWIG). The ABC transmembrane type-1 domain maps to 57–357 (LILMLLVLFI…FRLFYEQFTL (301 aa)). In terms of domain architecture, ABC transporter spans 390–587 (VALKNFGIKD…QLKLDVCLLC (198 aa)). Position 423–430 (423–430 (GASGTGKT)) interacts with ATP.

This sequence belongs to the ABC transporter superfamily.

Its subcellular location is the cell inner membrane. This is an uncharacterized protein from Haemophilus influenzae (strain ATCC 51907 / DSM 11121 / KW20 / Rd).